The sequence spans 795 residues: Delta-1-pyrroline-5-carboxylate synthase (795 aa).

The glutamate 5-kinase stretch occupies residues 1-361; the sequence is MLSQVYRCGF…FFSEVKPAGP (361 aa). S117, D223, and N246 together coordinate substrate. ATP-binding positions include 266–267 and 305–311; these read SD and MGGMEAK. N6-succinyllysine is present on residues K311, K347, and K550. The gamma-glutamyl phosphate reductase stretch occupies residues 362-795; it reads TVEQQGEMAR…NLPIPQRNTN (434 aa).

It in the N-terminal section; belongs to the glutamate 5-kinase family. In the C-terminal section; belongs to the gamma-glutamyl phosphate reductase family. Can form homodimers/multimers.

It localises to the mitochondrion. It is found in the mitochondrion matrix. It carries out the reaction L-glutamate + ATP = L-glutamyl 5-phosphate + ADP. The catalysed reaction is L-glutamate 5-semialdehyde + phosphate + NADP(+) = L-glutamyl 5-phosphate + NADPH + H(+). Its pathway is amino-acid biosynthesis; L-proline biosynthesis; L-glutamate 5-semialdehyde from L-glutamate: step 1/2. It functions in the pathway amino-acid biosynthesis; L-proline biosynthesis; L-glutamate 5-semialdehyde from L-glutamate: step 2/2. With respect to regulation, isoform Short: Inhibited by L-ornithine with a Ki of approximately 0.25 mm. Isoform Long: Insensitive to ornithine inhibition. This is due to the two amino acid insert which abolishes feedback inhibition of P5CS activity by L-ornithine. In terms of biological role, bifunctional enzyme that converts glutamate to glutamate 5-semialdehyde, an intermediate in the biosynthesis of proline, ornithine and arginine. This Homo sapiens (Human) protein is Delta-1-pyrroline-5-carboxylate synthase (ALDH18A1).